A 259-amino-acid chain; its full sequence is Deoxyribose-phosphate aldolase (259 aa).

The active-site Proton donor/acceptor is aspartate 102. Lysine 167 serves as the catalytic Schiff-base intermediate with acetaldehyde. The Proton donor/acceptor role is filled by lysine 201.

This sequence belongs to the DeoC/FbaB aldolase family. DeoC type 2 subfamily.

The protein resides in the cytoplasm. It catalyses the reaction 2-deoxy-D-ribose 5-phosphate = D-glyceraldehyde 3-phosphate + acetaldehyde. It functions in the pathway carbohydrate degradation; 2-deoxy-D-ribose 1-phosphate degradation; D-glyceraldehyde 3-phosphate and acetaldehyde from 2-deoxy-alpha-D-ribose 1-phosphate: step 2/2. Its function is as follows. Catalyzes a reversible aldol reaction between acetaldehyde and D-glyceraldehyde 3-phosphate to generate 2-deoxy-D-ribose 5-phosphate. The protein is Deoxyribose-phosphate aldolase of Escherichia coli O8 (strain IAI1).